Here is a 247-residue protein sequence, read N- to C-terminus: Caffeoyl-CoA O-methyltransferase (247 aa).

K21 provides a ligand contact to substrate. S-adenosyl-L-methionine is bound by residues T63, E85, 87 to 88 (GV), S93, D111, and A140. Residue D163 participates in substrate binding. D163 is a binding site for a divalent metal cation. An S-adenosyl-L-methionine-binding site is contributed by D165. D189 and N190 together coordinate a divalent metal cation. Substrate is bound at residue N194.

The protein belongs to the class I-like SAM-binding methyltransferase superfamily. Cation-dependent O-methyltransferase family. CCoAMT subfamily. A divalent metal cation is required as a cofactor.

The catalysed reaction is (E)-caffeoyl-CoA + S-adenosyl-L-methionine = (E)-feruloyl-CoA + S-adenosyl-L-homocysteine + H(+). It functions in the pathway aromatic compound metabolism; phenylpropanoid biosynthesis. In terms of biological role, methylates caffeoyl-CoA to feruloyl-CoA and 5-hydroxyferuloyl-CoA to sinapoyl-CoA. Plays a role in the synthesis of feruloylated polysaccharides. Involved in the reinforcement of the plant cell wall. Also involved in the responding to wounding or pathogen challenge by the increased formation of cell wall-bound ferulic acid polymers. The polypeptide is Caffeoyl-CoA O-methyltransferase (Populus tremuloides (Quaking aspen)).